Reading from the N-terminus, the 130-residue chain is Small ribosomal subunit protein uS8 (130 aa).

It belongs to the universal ribosomal protein uS8 family. In terms of assembly, part of the 30S ribosomal subunit. Contacts proteins S5 and S12.

One of the primary rRNA binding proteins, it binds directly to 16S rRNA central domain where it helps coordinate assembly of the platform of the 30S subunit. This chain is Small ribosomal subunit protein uS8, found in Haemophilus ducreyi (strain 35000HP / ATCC 700724).